We begin with the raw amino-acid sequence, 271 residues long: uncharacterized protein (271 aa).

An N-terminal signal peptide occupies residues 1–22; the sequence is MARELLFLACAIVIADSWPAKA.

This is an uncharacterized protein from Sinorhizobium fredii (strain NBRC 101917 / NGR234).